Reading from the N-terminus, the 106-residue chain is Probable insulin-like peptide beta-type 2 (106 aa).

Positions 1–15 (MNAIIFCLLFTTVTA) are cleaved as a signal peptide. Residues 16-56 (TYEVFGKGIEHRNEHLIINQLDIIPVESTPTPNRASRVQKR) constitute a propeptide that is removed on maturation. Cystine bridges form between Cys-58–Cys-86, Cys-70–Cys-99, Cys-73–Cys-100, and Cys-85–Cys-90.

It belongs to the insulin family.

Its subcellular location is the secreted. This chain is Probable insulin-like peptide beta-type 2 (ins-2), found in Caenorhabditis elegans.